Here is a 375-residue protein sequence, read N- to C-terminus: Non-structural protein NS5 (375 aa).

The sequence is that of Non-structural protein NS5 (NS-5) from Rottboellia (Sorghum).